The following is a 231-amino-acid chain: MMTTLTARPEAITFDPQQTALIVVDMQNAYATPGGYLDLAGFDVSTTRPVIANIQTAVTAARTAGMLIIWFQNGWDEQYVEAGGPGSPNYHKSNALKTMRNQPLLQGKLLAKGSWDYQLVDELVPQPGDIVLPKPRYSGFFNTPLDSILRSRGIRHLVFTGIATNVCVESTLRDGFFLEYFGVVLEDATHQAGPEFAQKAALFNIETFFGWVSDVETFCDALSSTSFARIA.

The active-site Proton acceptor is the aspartate 25. Lysine 134 is an active-site residue. Cysteine 167 serves as the catalytic Nucleophile.

The protein belongs to the isochorismatase family. RutB subfamily.

It carries out the reaction (Z)-3-ureidoacrylate + H2O + H(+) = (Z)-3-aminoacrylate + NH4(+) + CO2. The catalysed reaction is (Z)-3-ureidoacrylate + H2O = (Z)-3-aminoacrylate + carbamate + H(+). The enzyme catalyses (Z)-2-methylureidoacrylate + H2O + H(+) = (Z)-2-methylaminoacrylate + NH4(+) + CO2. Functionally, hydrolyzes ureidoacrylate to form aminoacrylate and carbamate. The carbamate hydrolyzes spontaneously, thereby releasing one of the nitrogen atoms of the pyrimidine ring as ammonia and one of its carbon atoms as CO2. The chain is Ureidoacrylate amidohydrolase RutB from Escherichia coli O18:K1:H7 (strain IHE3034 / ExPEC).